Here is a 265-residue protein sequence, read N- to C-terminus: 2-C-methyl-D-erythritol 4-phosphate cytidylyltransferase (265 aa).

Basic and acidic residues predominate over residues 231–241 (DRGGASREAER). Positions 231–265 (DRGGASREAERSAMPSAATSVFSGARSAASGSEEV) are disordered. The segment covering 253–265 (SGARSAASGSEEV) has biased composition (low complexity).

This sequence belongs to the IspD/TarI cytidylyltransferase family. IspD subfamily.

The catalysed reaction is 2-C-methyl-D-erythritol 4-phosphate + CTP + H(+) = 4-CDP-2-C-methyl-D-erythritol + diphosphate. It functions in the pathway isoprenoid biosynthesis; isopentenyl diphosphate biosynthesis via DXP pathway; isopentenyl diphosphate from 1-deoxy-D-xylulose 5-phosphate: step 2/6. Functionally, catalyzes the formation of 4-diphosphocytidyl-2-C-methyl-D-erythritol from CTP and 2-C-methyl-D-erythritol 4-phosphate (MEP). This chain is 2-C-methyl-D-erythritol 4-phosphate cytidylyltransferase, found in Xanthomonas campestris pv. campestris (strain 8004).